The chain runs to 211 residues: FMN-dependent NADH:quinone oxidoreductase (211 aa).

17-19 (SYS) is an FMN binding site.

Belongs to the azoreductase type 1 family. As to quaternary structure, homodimer. It depends on FMN as a cofactor.

The catalysed reaction is 2 a quinone + NADH + H(+) = 2 a 1,4-benzosemiquinone + NAD(+). It carries out the reaction N,N-dimethyl-1,4-phenylenediamine + anthranilate + 2 NAD(+) = 2-(4-dimethylaminophenyl)diazenylbenzoate + 2 NADH + 2 H(+). Quinone reductase that provides resistance to thiol-specific stress caused by electrophilic quinones. Functionally, also exhibits azoreductase activity. Catalyzes the reductive cleavage of the azo bond in aromatic azo compounds to the corresponding amines. This is FMN-dependent NADH:quinone oxidoreductase from Bacillus velezensis (strain DSM 23117 / BGSC 10A6 / LMG 26770 / FZB42) (Bacillus amyloliquefaciens subsp. plantarum).